Consider the following 273-residue polypeptide: Dermonecrotic toxin LarSicTox-alphaIB1aiv (273 aa).

His5 is an active-site residue. Mg(2+) contacts are provided by Glu25 and Asp27. His41 serves as the catalytic Nucleophile. 2 disulfides stabilise this stretch: Cys45–Cys51 and Cys47–Cys190. Asp85 is a binding site for Mg(2+). Residue Asn250 is glycosylated (N-linked (GlcNAc...) asparagine).

Belongs to the arthropod phospholipase D family. Class II subfamily. Mg(2+) serves as cofactor. In terms of tissue distribution, expressed by the venom gland.

The protein localises to the secreted. It carries out the reaction an N-(acyl)-sphingosylphosphocholine = an N-(acyl)-sphingosyl-1,3-cyclic phosphate + choline. The catalysed reaction is an N-(acyl)-sphingosylphosphoethanolamine = an N-(acyl)-sphingosyl-1,3-cyclic phosphate + ethanolamine. The enzyme catalyses a 1-acyl-sn-glycero-3-phosphocholine = a 1-acyl-sn-glycero-2,3-cyclic phosphate + choline. It catalyses the reaction a 1-acyl-sn-glycero-3-phosphoethanolamine = a 1-acyl-sn-glycero-2,3-cyclic phosphate + ethanolamine. Functionally, dermonecrotic toxins cleave the phosphodiester linkage between the phosphate and headgroup of certain phospholipids (sphingolipid and lysolipid substrates), forming an alcohol (often choline) and a cyclic phosphate. This toxin acts on sphingomyelin (SM). It may also act on ceramide phosphoethanolamine (CPE), lysophosphatidylcholine (LPC) and lysophosphatidylethanolamine (LPE), but not on lysophosphatidylserine (LPS), and lysophosphatidylglycerol (LPG). It acts by transphosphatidylation, releasing exclusively cyclic phosphate products as second products. Induces dermonecrosis, hemolysis, increased vascular permeability, edema, inflammatory response, and platelet aggregation. This is Dermonecrotic toxin LarSicTox-alphaIB1aiv from Loxosceles arizonica (Arizona brown spider).